The chain runs to 294 residues: Large ribosomal subunit protein uL2c (294 aa).

The segment at 224 to 249 is disordered; that stretch reads VMNPVDHPHGGGGEGKSPIGRSRPVT.

Belongs to the universal ribosomal protein uL2 family. Part of the 50S ribosomal subunit.

The protein localises to the plastid. Its subcellular location is the chloroplast. The sequence is that of Large ribosomal subunit protein uL2c (rpl2) from Porphyra purpurea (Red seaweed).